A 488-amino-acid chain; its full sequence is Peptidoglycan endopeptidase LytF (488 aa).

Residues 1–26 form the signal peptide; it reads MKKKLAAGLTASAIVGTTLVVTPAEA. 2 LysM domains span residues 27 to 70 and 92 to 135; these read ATIK…TLTI and SVYT…KLKV. 3 disordered regions span residues 70–93, 137–176, and 218–239; these read IPGSKSSTSSSTSSSTTKKSGSSV, GTVSSSSSSSKKSNSNKSSSSSSKSSSNKSSSSSSSTGTY, and KSSGSDTSSKDNSSKSNQTSAT. Low complexity-rich tracts occupy residues 72–93 and 140–172; these read GSKSSTSSSTSSSTTKKSGSSV and SSSSSSSKKSNSNKSSSSSSKSSSNKSSSSSSS. The 44-residue stretch at 174 to 217 folds into the LysM 3 domain; sequence GTYKVQLGDSLWKIANKVNMSIAELKVLNNLKSDTIYVNQVLKT. One can recognise a LysM 4 domain in the interval 240–283; it reads TKYTVKSGDSLWKIANNYNLTVQQIRNINNLKSDVLYVGQVLKL. The interval 286–306 is disordered; the sequence is KASSGSSSSSSSSSNASSGTT. A LysM 5 domain is found at 307–350; sequence TTYTVKSGDSLWVIAQKFNVTAQQIREKNNLKTDVLQVGQKLVI. Residues 370–488 form the NlpC/P60 domain; the sequence is SAKINTMISA…QRYLGAKRYF (119 aa). Cys-400 serves as the catalytic Nucleophile. The Proton acceptor role is filled by His-449. The active site involves Asn-461.

It belongs to the peptidase C40 family.

It localises to the secreted. The protein resides in the cell wall. With respect to regulation, is inhibited in vitro by para-hydroxymercuribenzoate, a sulfydryl inhibitor. Cell wall hydrolase that cleaves gamma-D-glutamate-meso-diaminopimelate bonds in peptidoglycan. LytF is necessary and sufficient for vegetative daughter cell separation, and also seems to play a role in cell autolysis. This chain is Peptidoglycan endopeptidase LytF (lytF), found in Bacillus subtilis (strain 168).